A 239-amino-acid polypeptide reads, in one-letter code: MFLFPAIDLKDGACVRLKLGLMEESTVFNTDPGAQARDFAAAGAEWIHVVDLNGAFAGKPVNGAAVDSILKSVSVPVQLGGGIREMATIEDWLARGIRRVILGTVALKNPALVKEACQRFPGRVAVGIDAKGGKVAVEGWAETSDLTVLELARKFEDCGVAALIYTDIDRDGVLAGPNVAATAALADAISIPVIASGGVSSLVDLKALKAYPKLEGVISGRAIYDGRIDVAQAIALLKA.

Asp8 (proton acceptor) is an active-site residue. Residue Asp129 is the Proton donor of the active site.

This sequence belongs to the HisA/HisF family.

The protein resides in the cytoplasm. It carries out the reaction 1-(5-phospho-beta-D-ribosyl)-5-[(5-phospho-beta-D-ribosylamino)methylideneamino]imidazole-4-carboxamide = 5-[(5-phospho-1-deoxy-D-ribulos-1-ylimino)methylamino]-1-(5-phospho-beta-D-ribosyl)imidazole-4-carboxamide. The protein operates within amino-acid biosynthesis; L-histidine biosynthesis; L-histidine from 5-phospho-alpha-D-ribose 1-diphosphate: step 4/9. This chain is 1-(5-phosphoribosyl)-5-[(5-phosphoribosylamino)methylideneamino] imidazole-4-carboxamide isomerase, found in Paramagnetospirillum magneticum (strain ATCC 700264 / AMB-1) (Magnetospirillum magneticum).